The chain runs to 205 residues: Rho-related protein racI (205 aa).

Residue 12-19 participates in GTP binding; sequence GDSKTGKT. The Effector region motif lies at 34–42; sequence YVPSHVDAT. Residues 59–63 and 119–122 each bind GTP; these read DSSAL and TKCD. Cys-202 bears the Cysteine methyl ester mark. Cys-202 is lipidated: S-geranylgeranyl cysteine. The propeptide at 203–205 is removed in mature form; the sequence is IIQ.

This sequence belongs to the small GTPase superfamily. Rho family.

It is found in the cell membrane. The polypeptide is Rho-related protein racI (racI) (Dictyostelium discoideum (Social amoeba)).